Reading from the N-terminus, the 249-residue chain is Phosphate import ATP-binding protein PstB 2 (249 aa).

Residues 4–244 enclose the ABC transporter domain; sequence FDIENLDLYY…PSDDRTRGYV (241 aa). 36 to 43 contacts ATP; it reads GPSGCGKS.

It belongs to the ABC transporter superfamily. Phosphate importer (TC 3.A.1.7) family. As to quaternary structure, the complex is composed of two ATP-binding proteins (PstB), two transmembrane proteins (PstC and PstA) and a solute-binding protein (PstS).

It is found in the cell inner membrane. The enzyme catalyses phosphate(out) + ATP + H2O = ADP + 2 phosphate(in) + H(+). In terms of biological role, part of the ABC transporter complex PstSACB involved in phosphate import. Responsible for energy coupling to the transport system. In Vibrio vulnificus (strain CMCP6), this protein is Phosphate import ATP-binding protein PstB 2.